We begin with the raw amino-acid sequence, 195 residues long: Imidazoleglycerol-phosphate dehydratase (195 aa).

It belongs to the imidazoleglycerol-phosphate dehydratase family.

The protein localises to the cytoplasm. The enzyme catalyses D-erythro-1-(imidazol-4-yl)glycerol 3-phosphate = 3-(imidazol-4-yl)-2-oxopropyl phosphate + H2O. The protein operates within amino-acid biosynthesis; L-histidine biosynthesis; L-histidine from 5-phospho-alpha-D-ribose 1-diphosphate: step 6/9. This is Imidazoleglycerol-phosphate dehydratase from Bordetella avium (strain 197N).